A 504-amino-acid chain; its full sequence is Pup--protein ligase (504 aa).

Mg(2+) is bound at residue E30. R74 provides a ligand contact to ATP. Y76 contacts Mg(2+). Residue D78 is the Proton acceptor of the active site. E84 lines the Mg(2+) pocket. The ATP site is built by T87 and W459.

Belongs to the Pup ligase/Pup deamidase family. Pup-conjugating enzyme subfamily.

The enzyme catalyses ATP + [prokaryotic ubiquitin-like protein]-L-glutamate + [protein]-L-lysine = ADP + phosphate + N(6)-([prokaryotic ubiquitin-like protein]-gamma-L-glutamyl)-[protein]-L-lysine.. It functions in the pathway protein degradation; proteasomal Pup-dependent pathway. The protein operates within protein modification; protein pupylation. Catalyzes the covalent attachment of the prokaryotic ubiquitin-like protein modifier Pup to the proteasomal substrate proteins, thereby targeting them for proteasomal degradation. This tagging system is termed pupylation. The ligation reaction involves the side-chain carboxylate of the C-terminal glutamate of Pup and the side-chain amino group of a substrate lysine. This Corynebacterium urealyticum (strain ATCC 43042 / DSM 7109) protein is Pup--protein ligase.